The sequence spans 428 residues: Maltoporin (428 aa).

The first 24 residues, 1 to 24, serve as a signal peptide directing secretion; it reads MKSMRILPISLTIMAGLLSIEASA.

The protein belongs to the porin LamB (TC 1.B.3) family. In terms of assembly, homotrimer formed of three 18-stranded antiparallel beta-barrels, containing three independent channels.

It localises to the cell outer membrane. The catalysed reaction is beta-maltose(in) = beta-maltose(out). Functionally, involved in the transport of maltose and maltodextrins. The sequence is that of Maltoporin from Photorhabdus laumondii subsp. laumondii (strain DSM 15139 / CIP 105565 / TT01) (Photorhabdus luminescens subsp. laumondii).